A 238-amino-acid chain; its full sequence is Dephospho-CoA kinase (238 aa).

The 231-residue stretch at 3–233 (IIGLTGGVGT…QRPFASPPRA (231 aa)) folds into the DPCK domain. ATP is bound at residue 11–16 (GTGKST). Disordered regions lie at residues 110–129 (HGVPLEEEPASQKRSGVGFS) and 219–238 (LASAGQRPFASPPRAGYSDG).

Belongs to the CoaE family.

It localises to the cytoplasm. The catalysed reaction is 3'-dephospho-CoA + ATP = ADP + CoA + H(+). It participates in cofactor biosynthesis; coenzyme A biosynthesis; CoA from (R)-pantothenate: step 5/5. Functionally, catalyzes the phosphorylation of the 3'-hydroxyl group of dephosphocoenzyme A to form coenzyme A. The polypeptide is Dephospho-CoA kinase (Synechococcus sp. (strain JA-2-3B'a(2-13)) (Cyanobacteria bacterium Yellowstone B-Prime)).